A 536-amino-acid chain; its full sequence is Probable serine/threonine-protein kinase DDB_G0268550 (536 aa).

Positions 14–305 constitute a Protein kinase domain; it reads EIIEKNYRKG…IDVLEIHPFL (292 aa). Residues 20–28 and Lys51 each bind ATP; that span reads YRKGGFSKI. Asp147 functions as the Proton acceptor in the catalytic mechanism. Positions 161–192 are disordered; it reads DNNNNNNNNNNNNNNNNNNNSNINDDNNNSNS.

Belongs to the protein kinase superfamily. Ser/Thr protein kinase family. Mg(2+) is required as a cofactor.

It carries out the reaction L-seryl-[protein] + ATP = O-phospho-L-seryl-[protein] + ADP + H(+). It catalyses the reaction L-threonyl-[protein] + ATP = O-phospho-L-threonyl-[protein] + ADP + H(+). This chain is Probable serine/threonine-protein kinase DDB_G0268550, found in Dictyostelium discoideum (Social amoeba).